The chain runs to 255 residues: MRILCTNDDGIHAPGLKVIEEIARALSDDVWIVAPELDQSGVSHSLSLNDPLRLREVGPRHFAVRGTPTDCVIMGARHILGEKRPDLVLSGVNKGRNVAEDVVYSGTIAGALEGTILGLPSFALSQEFSIATRDKPSWDTALKFGPQIVRKVLDAGVPKNTVINVNFPSCAPDQVKGIVVTRQGKRNLGFLKVDERRDGRGNPYFWIGFDRAAALDVPEEGTDLAALAAHYVSVTPLRLDRTDEAFSGKLGSILA.

Asp-8, Asp-9, Ser-40, and Asn-93 together coordinate a divalent metal cation.

This sequence belongs to the SurE nucleotidase family. It depends on a divalent metal cation as a cofactor.

The protein resides in the cytoplasm. The enzyme catalyses a ribonucleoside 5'-phosphate + H2O = a ribonucleoside + phosphate. Functionally, nucleotidase that shows phosphatase activity on nucleoside 5'-monophosphates. In Bradyrhizobium sp. (strain ORS 278), this protein is 5'-nucleotidase SurE.